Reading from the N-terminus, the 235-residue chain is Probable transcriptional regulatory protein Cla_1081 (235 aa).

Belongs to the TACO1 family.

It is found in the cytoplasm. The protein is Probable transcriptional regulatory protein Cla_1081 of Campylobacter lari (strain RM2100 / D67 / ATCC BAA-1060).